Consider the following 210-residue polypeptide: 2-Cys peroxiredoxin BAS1, chloroplastic (210 aa).

The transit peptide at 1-10 (DARARSFVAR) directs the protein to the chloroplast. Residues 18–177 (PLVGNKAPDF…TLRTLQALQY (160 aa)) form the Thioredoxin domain. Cys64 serves as the catalytic Cysteine sulfenic acid (-SOH) intermediate.

This sequence belongs to the peroxiredoxin family. AhpC/Prx1 subfamily. As to quaternary structure, homodimer; disulfide-linked, upon oxidation. In terms of tissue distribution, expressed in leaf blade, sheath, basiplast, stem and green spike. Maximal expression in young developing shoots segments where cell division and elongation take place. Not expressed in roots.

The protein localises to the plastid. It is found in the chloroplast. It catalyses the reaction a hydroperoxide + [thioredoxin]-dithiol = an alcohol + [thioredoxin]-disulfide + H2O. Its function is as follows. Thiol-specific peroxidase that catalyzes the reduction of hydrogen peroxide and organic hydroperoxides to water and alcohols, respectively. Plays a role in cell protection against oxidative stress by detoxifying peroxides. May be an antioxidant enzyme particularly in the developing shoot and photosynthesizing leaf. This Hordeum vulgare (Barley) protein is 2-Cys peroxiredoxin BAS1, chloroplastic (BAS1).